Consider the following 69-residue polypeptide: Pancreatic secretory trypsin inhibitor (69 aa).

In terms of domain architecture, Kazal-like spans 8–65 (TGTEAACSNYDLKKGCAKIFDPVCGTDNILYSNECLLCFQNLQRKTNVRIKRRGTCQE). Intrachain disulfides connect cysteine 14–cysteine 45, cysteine 23–cysteine 42, and cysteine 31–cysteine 63.

The protein resides in the secreted. In terms of biological role, this is a trypsin inhibitor, its physiological function is to prevent the trypsin-catalyzed premature activation of zymogens within the pancreas. In Struthio camelus (Common ostrich), this protein is Pancreatic secretory trypsin inhibitor (SPINK1).